Consider the following 251-residue polypeptide: Ubiquinone/menaquinone biosynthesis C-methyltransferase UbiE (251 aa).

S-adenosyl-L-methionine contacts are provided by residues Thr74, Asp95, 123–124, and Ser140; that span reads NA.

Belongs to the class I-like SAM-binding methyltransferase superfamily. MenG/UbiE family.

It catalyses the reaction a 2-demethylmenaquinol + S-adenosyl-L-methionine = a menaquinol + S-adenosyl-L-homocysteine + H(+). The enzyme catalyses a 2-methoxy-6-(all-trans-polyprenyl)benzene-1,4-diol + S-adenosyl-L-methionine = a 5-methoxy-2-methyl-3-(all-trans-polyprenyl)benzene-1,4-diol + S-adenosyl-L-homocysteine + H(+). The protein operates within quinol/quinone metabolism; menaquinone biosynthesis; menaquinol from 1,4-dihydroxy-2-naphthoate: step 2/2. Its pathway is cofactor biosynthesis; ubiquinone biosynthesis. Its function is as follows. Methyltransferase required for the conversion of demethylmenaquinol (DMKH2) to menaquinol (MKH2) and the conversion of 2-polyprenyl-6-methoxy-1,4-benzoquinol (DDMQH2) to 2-polyprenyl-3-methyl-6-methoxy-1,4-benzoquinol (DMQH2). This Escherichia coli O1:K1 / APEC protein is Ubiquinone/menaquinone biosynthesis C-methyltransferase UbiE.